A 219-amino-acid chain; its full sequence is PKHD-type hydroxylase Plav_0037 (219 aa).

One can recognise a Fe2OG dioxygenase domain in the interval 78–172 (NFIRILLSRY…RRAAVGWIRS (95 aa)). H96, D98, and H153 together coordinate Fe cation. R163 serves as a coordination point for 2-oxoglutarate.

It depends on Fe(2+) as a cofactor. The cofactor is L-ascorbate.

This Parvibaculum lavamentivorans (strain DS-1 / DSM 13023 / NCIMB 13966) protein is PKHD-type hydroxylase Plav_0037.